Here is a 406-residue protein sequence, read N- to C-terminus: Argininosuccinate synthase (406 aa).

8–16 (AYSGGLDTS) contacts ATP. Tyr-86 contacts L-citrulline. Position 116 (Gly-116) interacts with ATP. L-aspartate-binding residues include Thr-118, Asn-122, and Asp-123. Asn-122 contributes to the L-citrulline binding site. L-citrulline contacts are provided by Arg-126, Ser-174, Ser-183, Glu-259, and Tyr-271.

It belongs to the argininosuccinate synthase family. Type 1 subfamily. Homotetramer.

Its subcellular location is the cytoplasm. It catalyses the reaction L-citrulline + L-aspartate + ATP = 2-(N(omega)-L-arginino)succinate + AMP + diphosphate + H(+). The protein operates within amino-acid biosynthesis; L-arginine biosynthesis; L-arginine from L-ornithine and carbamoyl phosphate: step 2/3. The chain is Argininosuccinate synthase from Dehalococcoides mccartyi (strain ATCC BAA-2266 / KCTC 15142 / 195) (Dehalococcoides ethenogenes (strain 195)).